A 516-amino-acid polypeptide reads, in one-letter code: L-amino acid oxidase (516 aa).

The signal sequence occupies residues 1-18; sequence MNVFFMFSLLFLAALESC. Residues 61 to 62, 81 to 82, Arg-89, and 105 to 108 contribute to the FAD site; these read MS, EA, and GPMR. A substrate-binding site is contributed by Arg-108. Asn-190 carries an N-linked (GlcNAc...) asparagine glycan. FAD is bound at residue Val-279. 2 N-linked (GlcNAc...) asparagine glycosylation sites follow: Asn-299 and Asn-404. Cys-349 and Cys-430 are joined by a disulfide. Residues Glu-475 and 482-487 each bind FAD; that span reads GWIDST. 482 to 483 lines the substrate pocket; sequence GW.

It belongs to the flavin monoamine oxidase family. FIG1 subfamily. In terms of assembly, homodimer; non-covalently linked. Requires FAD as cofactor. In terms of processing, N-glycosylated (14%). The enzymatic activity remains unchanged after deglycosylation. In terms of tissue distribution, expressed by the venom gland.

It localises to the secreted. It catalyses the reaction an L-alpha-amino acid + O2 + H2O = a 2-oxocarboxylate + H2O2 + NH4(+). The enzyme catalyses L-leucine + O2 + H2O = 4-methyl-2-oxopentanoate + H2O2 + NH4(+). It carries out the reaction L-phenylalanine + O2 + H2O = 3-phenylpyruvate + H2O2 + NH4(+). The catalysed reaction is L-tryptophan + O2 + H2O = indole-3-pyruvate + H2O2 + NH4(+). It catalyses the reaction L-methionine + O2 + H2O = 4-methylsulfanyl-2-oxobutanoate + H2O2 + NH4(+). The enzyme catalyses L-isoleucine + O2 + H2O = (S)-3-methyl-2-oxopentanoate + H2O2 + NH4(+). Inhibited by the substrate analog N-acetyl tryptophan. Its function is as follows. Catalyzes an oxidative deamination of predominantly hydrophobic and aromatic L-amino acids, thus producing hydrogen peroxide that may contribute to the diverse toxic effects of this enzyme. Is highly active on L-Met&gt;L-Leu&gt;L-Phe&gt;L-Trp=L-Ile. Binds to the cell surface and enables the production of highly localized concentration of hydrogen peroxide in or near the binding interfaces. Does not bind to phospholipids. Induces platelet-rich plasma aggregation, shows cytotoxic effects on some cancer cell lines (B16-F10 (mouse melanoma), PC12 (rat pheochromocytoma), MCF-7 and MDA-MB-231 (human breast carcinoma)) and shows antibacterial activities against both Gram-positive and Gram-negative bacteria. Also exhibits hemorrhage and edema. Does not show cytotoxicity on erythrocytes and peripheral blood mononuclear cells. Its effect on platelets is controversial, since it either induces aggregation or inhibits agonist-induced aggregation. These different effects are probably due to different experimental conditions. The polypeptide is L-amino acid oxidase (Cerastes cerastes (Horned desert viper)).